We begin with the raw amino-acid sequence, 239 residues long: Transcriptional activatory protein AadR (239 aa).

27-149 (ICGELGPADH…FATRELSLAQ (123 aa)) lines the a nucleoside 3',5'-cyclic phosphate pocket. The HTH crp-type domain maps to 158-231 (RSAEEKVAAF…PDGVRVLDPK (74 aa)). A DNA-binding region (H-T-H motif) is located at residues 191–210 (RQDIADFLGLTIETVSRTFT).

Transcriptional activator of anaerobic gene expression. For aromatic acid degradation. Also required for the anaerobic degradation of benzoate. This Rhodopseudomonas palustris (strain ATCC BAA-98 / CGA009) protein is Transcriptional activatory protein AadR (aadR).